Consider the following 831-residue polypeptide: Periplasmic nitrate reductase (831 aa).

Positions 1–38 (MSMARRDFIKQTAAAAAATVAGVPLTGYTQNIVTESEA) form a signal peptide, tat-type signal. In terms of domain architecture, 4Fe-4S Mo/W bis-MGD-type spans 41 to 97 (LKWSKAPCRFCGTGCGVNVAVKDNQVVATHGDFNAEVNKGLNCVKGYFLSKIMYGSD). Residues cysteine 48, cysteine 51, cysteine 55, and cysteine 83 each contribute to the [4Fe-4S] cluster site. Residues lysine 85, glutamine 152, asparagine 177, cysteine 181, 214–221 (WGSNMAEM), 245–249 (STFEH), 264–266 (QSD), methionine 375, glutamine 379, asparagine 485, 511–512 (SD), lysine 534, aspartate 561, and 721–730 (TGRVLEHWHS) each bind Mo-bis(molybdopterin guanine dinucleotide). Substrate is bound at residue tryptophan 797. Mo-bis(molybdopterin guanine dinucleotide) contacts are provided by asparagine 805 and lysine 822.

Belongs to the prokaryotic molybdopterin-containing oxidoreductase family. NasA/NapA/NarB subfamily. As to quaternary structure, component of the periplasmic nitrate reductase NapAB complex composed of NapA and NapB. [4Fe-4S] cluster serves as cofactor. It depends on Mo-bis(molybdopterin guanine dinucleotide) as a cofactor. Post-translationally, predicted to be exported by the Tat system. The position of the signal peptide cleavage has not been experimentally proven.

The protein localises to the periplasm. The enzyme catalyses 2 Fe(II)-[cytochrome] + nitrate + 2 H(+) = 2 Fe(III)-[cytochrome] + nitrite + H2O. Functionally, catalytic subunit of the periplasmic nitrate reductase complex NapAB. Receives electrons from NapB and catalyzes the reduction of nitrate to nitrite. This chain is Periplasmic nitrate reductase, found in Bordetella parapertussis (strain 12822 / ATCC BAA-587 / NCTC 13253).